The chain runs to 219 residues: Small ribosomal subunit protein uS5 (219 aa).

Polar residues predominate over residues 1-21 (MTDQNQKANQGNGLQTTNLQA). The segment at 1–61 (MTDQNQKANQ…NQNRRFQKPA (61 aa)) is disordered. The segment covering 35–47 (GIKKAVSKKEGGG) has biased composition (basic and acidic residues). The S5 DRBM domain maps to 66–129 (FEERIVKLKR…KAAHNSLHTI (64 aa)).

This sequence belongs to the universal ribosomal protein uS5 family. As to quaternary structure, part of the 30S ribosomal subunit. Contacts proteins S4 and S8.

Functionally, with S4 and S12 plays an important role in translational accuracy. Its function is as follows. Located at the back of the 30S subunit body where it stabilizes the conformation of the head with respect to the body. The protein is Small ribosomal subunit protein uS5 of Mycoplasma pneumoniae (strain ATCC 29342 / M129 / Subtype 1) (Mycoplasmoides pneumoniae).